A 51-amino-acid polypeptide reads, in one-letter code: Large ribosomal subunit protein eL39 (51 aa).

It belongs to the eukaryotic ribosomal protein eL39 family.

This Methanobrevibacter smithii (strain ATCC 35061 / DSM 861 / OCM 144 / PS) protein is Large ribosomal subunit protein eL39.